Reading from the N-terminus, the 205-residue chain is Urease accessory protein UreG (205 aa).

14 to 21 (GPVGSGKT) is a binding site for GTP.

This sequence belongs to the SIMIBI class G3E GTPase family. UreG subfamily. In terms of assembly, homodimer. UreD, UreF and UreG form a complex that acts as a GTP-hydrolysis-dependent molecular chaperone, activating the urease apoprotein by helping to assemble the nickel containing metallocenter of UreC. The UreE protein probably delivers the nickel.

Its subcellular location is the cytoplasm. In terms of biological role, facilitates the functional incorporation of the urease nickel metallocenter. This process requires GTP hydrolysis, probably effectuated by UreG. In Citrobacter koseri (strain ATCC BAA-895 / CDC 4225-83 / SGSC4696), this protein is Urease accessory protein UreG.